A 925-amino-acid chain; its full sequence is Colossin-D (925 aa).

Positions 1-26 (MIKVFKDLKFLILITIILLNLKSINC) are cleaved as a signal peptide. Residues N47, N95, N142, N166, N283, N334, N344, N378, N401, N511, and N642 are each glycosylated (N-linked (GlcNAc...) asparagine).

Belongs to the serine-aspartate repeat-containing protein (SDr) family.

The protein resides in the secreted. The protein is Colossin-D (colD) of Dictyostelium discoideum (Social amoeba).